A 527-amino-acid chain; its full sequence is Rhamnogalacturonate lyase A (527 aa).

An N-terminal signal peptide occupies residues 1-20 (MLSKTFLLSSAVLWARVANA). 2 N-linked (GlcNAc...) asparagine glycosylation sites follow: Asn27 and Asn46. Disulfide bonds link Cys50–Cys93 and Cys184–Cys193. A glycan (N-linked (GlcNAc...) asparagine) is linked at Asn351.

Belongs to the polysaccharide lyase 4 family.

It is found in the secreted. It carries out the reaction Endotype eliminative cleavage of L-alpha-rhamnopyranosyl-(1-&gt;4)-alpha-D-galactopyranosyluronic acid bonds of rhamnogalacturonan I domains in ramified hairy regions of pectin leaving L-rhamnopyranose at the reducing end and 4-deoxy-4,5-unsaturated D-galactopyranosyluronic acid at the non-reducing end.. Its function is as follows. Pectinolytic enzymes consist of four classes of enzymes: pectin lyase, polygalacturonase, pectin methylesterase and rhamnogalacturonase. Degrades the rhamnogalacturonan I (RG-I) backbone of pectin. Active against linseed rhamnogalacturonan. The chain is Rhamnogalacturonate lyase A (rglA) from Emericella nidulans (strain FGSC A4 / ATCC 38163 / CBS 112.46 / NRRL 194 / M139) (Aspergillus nidulans).